The primary structure comprises 215 residues: tRNA (guanine-N(7)-)-methyltransferase (215 aa).

Residues E44, E69, D96, and D118 each coordinate S-adenosyl-L-methionine. The active site involves D118. Substrate-binding positions include K122, D154, and 191–194; that span reads TEYE.

This sequence belongs to the class I-like SAM-binding methyltransferase superfamily. TrmB family.

It catalyses the reaction guanosine(46) in tRNA + S-adenosyl-L-methionine = N(7)-methylguanosine(46) in tRNA + S-adenosyl-L-homocysteine. It participates in tRNA modification; N(7)-methylguanine-tRNA biosynthesis. Functionally, catalyzes the formation of N(7)-methylguanine at position 46 (m7G46) in tRNA. In Exiguobacterium sp. (strain ATCC BAA-1283 / AT1b), this protein is tRNA (guanine-N(7)-)-methyltransferase.